The following is a 105-amino-acid chain: Thioredoxin (105 aa).

In terms of domain architecture, Thioredoxin spans 2–105; it reads VKQIESKTAF…KLEATINELV (104 aa). Lysine 3 is modified (N6-acetyllysine). N6-succinyllysine is present on lysine 8. Active-site nucleophile residues include cysteine 32 and cysteine 35. Cysteine 32 and cysteine 35 form a disulfide bridge. Position 39 is an N6-acetyllysine (lysine 39). Residues cysteine 62 and cysteine 69 each carry the S-nitrosocysteine modification. Residue cysteine 73 is modified to S-nitrosocysteine; alternate. Lysine 94 bears the N6-acetyllysine; alternate mark. An N6-succinyllysine; alternate modification is found at lysine 94.

This sequence belongs to the thioredoxin family. In terms of assembly, homodimer; disulfide-linked. Interacts with TXNIP through the redox-active site. Interacts with MAP3K5 and CASP3. In case of infection, interacts with S.typhimurium protein slrP. Interacts with APEX1; the interaction stimulates the FOS/JUN AP-1 DNA-binding activity in a redox-dependent manner. Post-translationally, in the fully reduced protein, both Cys-69 and Cys-73 are nitrosylated in response to nitric oxide (NO). When two disulfide bonds are present in the protein, only Cys-73 is nitrosylated. Cys-73 can serve as donor for nitrosylation of target proteins. In terms of processing, in case of infection, ubiquitinated by S.typhimurium protein slrP, leading to its degradation.

It localises to the nucleus. The protein resides in the cytoplasm. Its subcellular location is the secreted. Its function is as follows. Participates in various redox reactions through the reversible oxidation of its active center dithiol to a disulfide and catalyzes dithiol-disulfide exchange reactions. Plays a role in the reversible S-nitrosylation of cysteine residues in target proteins, and thereby contributes to the response to intracellular nitric oxide. Nitrosylates the active site Cys of CASP3 in response to nitric oxide (NO), and thereby inhibits caspase-3 activity. Induces the FOS/JUN AP-1 DNA-binding activity in ionizing radiation (IR) cells through its oxidation/reduction status and stimulates AP-1 transcriptional activity. In terms of biological role, ADF augments the expression of the interleukin-2 receptor TAC (IL2R/P55). The polypeptide is Thioredoxin (TXN) (Homo sapiens (Human)).